Reading from the N-terminus, the 345-residue chain is Selenide, water dikinase (345 aa).

Cys-15 is an active-site residue. ATP contacts are provided by residues Lys-18 and 46–48; that span reads SKD. Asp-49 serves as a coordination point for Mg(2+). ATP contacts are provided by residues Asp-66, Asp-89, and 137-139; that span reads GHS. Residue Asp-89 coordinates Mg(2+). A Mg(2+)-binding site is contributed by Asp-225.

Belongs to the selenophosphate synthase 1 family. Class I subfamily. In terms of assembly, homodimer. The cofactor is Mg(2+).

The catalysed reaction is hydrogenselenide + ATP + H2O = selenophosphate + AMP + phosphate + 2 H(+). Its function is as follows. Synthesizes selenophosphate from selenide and ATP. The protein is Selenide, water dikinase of Aeromonas hydrophila subsp. hydrophila (strain ATCC 7966 / DSM 30187 / BCRC 13018 / CCUG 14551 / JCM 1027 / KCTC 2358 / NCIMB 9240 / NCTC 8049).